A 358-amino-acid polypeptide reads, in one-letter code: Purine permease 2 (358 aa).

A run of 10 helical transmembrane segments spans residues 6-26, 37-57, 74-94, 110-130, 134-154, 170-190, 209-229, 262-282, 288-308, and 312-332; these read VLVI…PLMM, IWFP…PLLL, FFLM…LVGF, TASL…FFMV, FTPF…VLAL, VVGF…LPLV, FQMV…LAAG, VIVF…GLIF, VSGI…VICF, and FQAG…SYFY. The EamA domain occupies 46–154; the sequence is VGCPLIFFPL…LTGGAVVLAL (109 aa).

It belongs to the purine permeases (TC 2.A.7.14) family. In terms of tissue distribution, expressed in the vascular system of leaves. Restricted to the phloem. Expressed in flowers and roots and not detected in stems.

It is found in the membrane. Its activity is regulated as follows. Competitive inhibition of adenine transport by isopentenyladenine, kinetin, benzylaminopurine, trans- and cis-zeatin and trans-zeatin riboside. Its function is as follows. Mediates adenine transport. May be involved in the uptake of cytokinin analogs. The chain is Purine permease 2 (PUP2) from Arabidopsis thaliana (Mouse-ear cress).